Reading from the N-terminus, the 522-residue chain is Serine/threonine-protein kinase pak-2 (522 aa).

Positions 16–29 (ISTPSNFEHRIHAG) constitute a CRIB domain. The span at 183-204 (TTTPQLQPKSPSTPQAMRQQPK) shows a compositional bias: polar residues. The interval 183 to 208 (TTTPQLQPKSPSTPQAMRQQPKCTEG) is disordered. One can recognise a Protein kinase domain in the interval 231–482 (LTDYKQIGEG…AKDLLRHPFF (252 aa)). Residues 237-245 (IGEGSTGVV) and K260 contribute to the ATP site. The Proton acceptor role is filled by D350.

The protein belongs to the protein kinase superfamily. STE Ser/Thr protein kinase family. STE20 subfamily. The cofactor is Mg(2+). It depends on Mn(2+) as a cofactor. In terms of tissue distribution, expressed in pharynx, vulva and spermatheca. Unlike other p21-activated kinases, expression is not detected in neurons.

The catalysed reaction is L-seryl-[protein] + ATP = O-phospho-L-seryl-[protein] + ADP + H(+). It catalyses the reaction L-threonyl-[protein] + ATP = O-phospho-L-threonyl-[protein] + ADP + H(+). Serine/threonine-protein kinase which plays a redundant role with pak-1 in embryogenesis but, in contrast to pak-1, is not involved in commissural axon guidance of ventral cord motoneurons or in distal tip cell (DTC) migration. This chain is Serine/threonine-protein kinase pak-2, found in Caenorhabditis elegans.